A 390-amino-acid chain; its full sequence is Cystathionine beta-lyase (390 aa).

Lysine 202 carries the N6-(pyridoxal phosphate)lysine modification.

This sequence belongs to the trans-sulfuration enzymes family. Pyridoxal 5'-phosphate serves as cofactor.

It localises to the cytoplasm. It is found in the nucleus. It carries out the reaction L,L-cystathionine + H2O = L-homocysteine + pyruvate + NH4(+). It catalyses the reaction an S-substituted L-cysteine + H2O = a thiol + pyruvate + NH4(+). It participates in amino-acid biosynthesis; L-methionine biosynthesis via de novo pathway; L-homocysteine from L-cystathionine: step 1/1. This is Cystathionine beta-lyase (str3) from Schizosaccharomyces pombe (strain 972 / ATCC 24843) (Fission yeast).